The primary structure comprises 250 residues: 2,3-bisphosphoglycerate-dependent phosphoglycerate mutase (250 aa).

Substrate contacts are provided by residues 10 to 17 (RHGESQWN), 23 to 24 (TG), Arg62, 89 to 92 (ERHY), Lys100, 116 to 117 (RR), and 185 to 186 (GN). The active-site Tele-phosphohistidine intermediate is His11. Glu89 functions as the Proton donor/acceptor in the catalytic mechanism.

The protein belongs to the phosphoglycerate mutase family. BPG-dependent PGAM subfamily. As to quaternary structure, homodimer.

It catalyses the reaction (2R)-2-phosphoglycerate = (2R)-3-phosphoglycerate. It functions in the pathway carbohydrate degradation; glycolysis; pyruvate from D-glyceraldehyde 3-phosphate: step 3/5. Functionally, catalyzes the interconversion of 2-phosphoglycerate and 3-phosphoglycerate. The protein is 2,3-bisphosphoglycerate-dependent phosphoglycerate mutase of Yersinia pseudotuberculosis serotype IB (strain PB1/+).